A 170-amino-acid polypeptide reads, in one-letter code: Peptide deformylase (170 aa).

Fe cation is bound by residues C88 and H130. Residue E131 is part of the active site. Position 134 (H134) interacts with Fe cation.

Belongs to the polypeptide deformylase family. Fe(2+) is required as a cofactor.

It catalyses the reaction N-terminal N-formyl-L-methionyl-[peptide] + H2O = N-terminal L-methionyl-[peptide] + formate. Its function is as follows. Removes the formyl group from the N-terminal Met of newly synthesized proteins. Requires at least a dipeptide for an efficient rate of reaction. N-terminal L-methionine is a prerequisite for activity but the enzyme has broad specificity at other positions. This is Peptide deformylase from Acetivibrio thermocellus (strain ATCC 27405 / DSM 1237 / JCM 9322 / NBRC 103400 / NCIMB 10682 / NRRL B-4536 / VPI 7372) (Clostridium thermocellum).